Here is a 350-residue protein sequence, read N- to C-terminus: Mitochondrial glycine transporter (350 aa).

Solcar repeat units follow at residues 23–107 (SKPK…LRQC), 134–218 (LSHT…SKKN), and 250–334 (SSIS…LILK). 6 consecutive transmembrane segments (helical) span residues 29–54 (FIAG…TRIQ), 82–108 (GTLP…RQCI), 140–165 (LLTG…VRYE), 193–216 (GFGA…EQSK), 254–280 (VNFV…KTRL), and 309–327 (GLGL…AWTV).

Belongs to the mitochondrial carrier (TC 2.A.29) family. SLC25A38 subfamily.

The protein localises to the mitochondrion inner membrane. It catalyses the reaction glycine(in) = glycine(out). In terms of biological role, mitochondrial glycine transporter that imports glycine into the mitochondrial matrix. Plays an important role in providing glycine for the first enzymatic step in heme biosynthesis, the condensation of glycine with succinyl-CoA to produce 5-aminolevulinate (ALA) in the mitochondrial matrix. The chain is Mitochondrial glycine transporter from Ajellomyces capsulatus (strain NAm1 / WU24) (Darling's disease fungus).